Consider the following 370-residue polypeptide: Putative agmatine deiminase (370 aa).

The active-site Amidino-cysteine intermediate is the Cys361.

This sequence belongs to the agmatine deiminase family.

It catalyses the reaction agmatine + H2O = N-carbamoylputrescine + NH4(+). The protein is Putative agmatine deiminase of Shewanella sp. (strain MR-7).